The following is a 533-amino-acid chain: Lymphocyte cytosolic protein 2 (533 aa).

The SAM domain occupies 12–78; the sequence is VLAWNSDNLA…SQDINKNEER (67 aa). Tyr-23 carries the phosphotyrosine modification. 2 disordered regions span residues 78-359 and 374-419; these read RRSI…PLAH and SASL…TPLD. A compositionally biased stretch (acidic residues) spans 94 to 144; the sequence is ETESHEEDDGGWSSFEDDYESPNDDDPDGEDDGDYESPNEEEQALVDDAAD. Polar residues predominate over residues 151–172; it reads NNEEALQSSILPPNSFHNTNSM. Over residues 186–201 the composition is skewed to pro residues; that stretch reads PPVPPLRPKPALPPLP. Phosphoserine occurs at positions 207 and 210. Over residues 340-354 the composition is skewed to polar residues; that stretch reads NTFPSRSVQPSSKNT. A phosphoserine mark is found at Ser-376 and Ser-410. Positions 400–411 are enriched in pro residues; that stretch reads LPVPNRPQPPSP. The SH2 domain maps to 422–530; it reads WYVSYITRPE…RYQCTLTHAA (109 aa).

Interacts with SLA. Interacts with CBLB. Interacts with GRB2. Interacts with SHB. Interacts with PRAM1. Interacts (via SH2 domain) with CD6 (via tyrosine phosphorylated C-terminus). Interacts with FYB1 and the phosphorylated form of FYB2. Interacts with 14-3-3 adapter/YWHAZ; this phosphorylation leads to YWHAZ proteolytic degradation. Interacts with VAV1; this interaction plays a role in TCR-mediated cytokine production. Interacts with AGER; this interaction plays an important role in AGER-mediated pro-inflammatory responses and cytokine release. Phosphorylated after T-cell receptor activation by ZAP70, ITK and TXK, which leads to the up-regulation of Th1 preferred cytokine IL-2. SYK-dependent phosphorylation is required for recruitment of PI3K signaling components. In terms of tissue distribution, highly expressed in spleen, thymus, and peripheral blood leukocytes.

Its subcellular location is the cytoplasm. Adapter protein primarily involved in signaling pathways within T-cells, as well as other immune cells such as platelets, mast cells, and natural killer (NK) cells. Plays a crucial role for transducing signal from the T-cell receptor (TCR) after antigen recognition leading to T-cell activation. Mechanistically, once phosphorylated by the kinase ZAP70, mediates interactions with the guanine-nucleotide exchange factor VAV1, the adapter protein NCK and the kinase ITK. In turn, stimulates the activation of PKC-theta/PRKCQ and NF-kappa-B transcriptional activity in response to CD3 and CD28 costimulation. Also plays an essential role in AGER-induced signaling pathways including p38 MAPK and ERK1/2 activation leading to cytokine release and pro-inflammatory responses. In Mus musculus (Mouse), this protein is Lymphocyte cytosolic protein 2 (Lcp2).